We begin with the raw amino-acid sequence, 269 residues long: Chymotrypsin-like elastase family member 3B (269 aa).

The first 16 residues, 1-16 (MLRLLSSLLLVALASG), serve as a signal peptide directing secretion. The propeptide at 17–27 (CGQPSHNPSSR) is activation peptide. One can recognise a Peptidase S1 domain in the interval 28-267 (VVNGEEAVPH…FIDWIEETIA (240 aa)). Cysteine 57 and cysteine 73 are joined by a disulfide. Residues histidine 72 and aspartate 122 each act as charge relay system in the active site. 3 cysteine pairs are disulfide-bonded: cysteine 156–cysteine 222, cysteine 187–cysteine 203, and cysteine 212–cysteine 243. Serine 216 functions as the Charge relay system in the catalytic mechanism.

The protein belongs to the peptidase S1 family. Elastase subfamily.

The catalysed reaction is Preferential cleavage: Ala-|-Xaa. Does not hydrolyze elastin.. Its function is as follows. Efficient protease with alanine specificity but only little elastolytic activity. This is Chymotrypsin-like elastase family member 3B (Cela3b) from Mus musculus (Mouse).